We begin with the raw amino-acid sequence, 272 residues long: 1,4-dihydroxy-2-naphthoyl-CoA synthase (272 aa).

Residues arginine 33, 72–76, tyrosine 84, 116–120, threonine 142, serine 148, tyrosine 245, and lysine 260 each bind substrate; these read SGGDQ and YAIGG. 141–143 lines the hydrogencarbonate pocket; it reads QTG.

It belongs to the enoyl-CoA hydratase/isomerase family. MenB subfamily. Hydrogencarbonate is required as a cofactor.

It catalyses the reaction 2-succinylbenzoyl-CoA + H(+) = 1,4-dihydroxy-2-naphthoyl-CoA + H2O. Its pathway is quinol/quinone metabolism; 1,4-dihydroxy-2-naphthoate biosynthesis; 1,4-dihydroxy-2-naphthoate from chorismate: step 6/7. It functions in the pathway quinol/quinone metabolism; menaquinone biosynthesis. Functionally, converts o-succinylbenzoyl-CoA (OSB-CoA) to 1,4-dihydroxy-2-naphthoyl-CoA (DHNA-CoA). In Staphylococcus epidermidis (strain ATCC 12228 / FDA PCI 1200), this protein is 1,4-dihydroxy-2-naphthoyl-CoA synthase.